The following is a 408-amino-acid chain: Succinylornithine transaminase (408 aa).

The residue at position 252 (lysine 252) is an N6-(pyridoxal phosphate)lysine.

Belongs to the class-III pyridoxal-phosphate-dependent aminotransferase family. AstC subfamily. Pyridoxal 5'-phosphate is required as a cofactor.

It catalyses the reaction N(2)-succinyl-L-ornithine + 2-oxoglutarate = N-succinyl-L-glutamate 5-semialdehyde + L-glutamate. Its pathway is amino-acid degradation; L-arginine degradation via AST pathway; L-glutamate and succinate from L-arginine: step 3/5. Catalyzes the transamination of N(2)-succinylornithine and alpha-ketoglutarate into N(2)-succinylglutamate semialdehyde and glutamate. Can also act as an acetylornithine aminotransferase. In Salmonella dublin (strain CT_02021853), this protein is Succinylornithine transaminase.